Here is a 220-residue protein sequence, read N- to C-terminus: Octanoyltransferase (220 aa).

The 182-residue stretch at 27–208 folds into the BPL/LPL catalytic domain; the sequence is PGTADEIWLC…QLARAHGQAV (182 aa). Residues 66–73, 139–141, and 152–154 each bind substrate; these read RGGQVTYH, ALG, and GLA. Cysteine 170 serves as the catalytic Acyl-thioester intermediate.

Belongs to the LipB family.

The protein localises to the cytoplasm. The catalysed reaction is octanoyl-[ACP] + L-lysyl-[protein] = N(6)-octanoyl-L-lysyl-[protein] + holo-[ACP] + H(+). It functions in the pathway protein modification; protein lipoylation via endogenous pathway; protein N(6)-(lipoyl)lysine from octanoyl-[acyl-carrier-protein]: step 1/2. Functionally, catalyzes the transfer of endogenously produced octanoic acid from octanoyl-acyl-carrier-protein onto the lipoyl domains of lipoate-dependent enzymes. Lipoyl-ACP can also act as a substrate although octanoyl-ACP is likely to be the physiological substrate. The sequence is that of Octanoyltransferase from Bordetella pertussis (strain Tohama I / ATCC BAA-589 / NCTC 13251).